We begin with the raw amino-acid sequence, 194 residues long: uncharacterized protein (194 aa).

This is an uncharacterized protein from Tomato ringspot virus (isolate raspberry) (ToRSV).